The primary structure comprises 110 residues: Holo-[acyl-carrier-protein] synthase (110 aa).

Mg(2+) is bound by residues aspartate 8 and glutamate 54.

Belongs to the P-Pant transferase superfamily. AcpS family. The cofactor is Mg(2+).

The protein resides in the cytoplasm. It catalyses the reaction apo-[ACP] + CoA = holo-[ACP] + adenosine 3',5'-bisphosphate + H(+). Its function is as follows. Transfers the 4'-phosphopantetheine moiety from coenzyme A to a Ser of acyl-carrier-protein. The chain is Holo-[acyl-carrier-protein] synthase from Mycoplasma mycoides subsp. mycoides SC (strain CCUG 32753 / NCTC 10114 / PG1).